The following is a 58-amino-acid chain: uncharacterized protein (58 aa).

It localises to the mitochondrion. This is an uncharacterized protein from Saccharomyces cerevisiae (strain ATCC 204508 / S288c) (Baker's yeast).